A 340-amino-acid polypeptide reads, in one-letter code: Probable complex I intermediate-associated protein 30, mitochondrial (340 aa).

Belongs to the CIA30 family.

It is found in the mitochondrion. Chaperone protein involved in the assembly of the mitochondrial NADH:ubiquinone oxidoreductase complex (complex I). Required for normal growth and reproduction. The polypeptide is Probable complex I intermediate-associated protein 30, mitochondrial (nuaf-1) (Caenorhabditis briggsae).